The primary structure comprises 37 residues: MFDDQDLGFFANFLGIFIFVLVMAYHFVMADVKYEGN.

The Lumenal portion of the chain corresponds to 1–8 (MFDDQDLG). The helical transmembrane segment at 9–29 (FFANFLGIFIFVLVMAYHFVM) threads the bilayer. The Cytoplasmic portion of the chain corresponds to 30 to 37 (ADVKYEGN).

It belongs to the OST4 family. As to quaternary structure, component of the oligosaccharyltransferase (OST) complex.

It localises to the endoplasmic reticulum membrane. Functionally, subunit of the oligosaccharyl transferase (OST) complex that catalyzes the initial transfer of a defined glycan (Glc(3)Man(9)GlcNAc(2) in eukaryotes) from the lipid carrier dolichol-pyrophosphate to an asparagine residue within an Asn-X-Ser/Thr consensus motif in nascent polypeptide chains, the first step in protein N-glycosylation. N-glycosylation occurs cotranslationally and the complex associates with the Sec61 complex at the channel-forming translocon complex that mediates protein translocation across the endoplasmic reticulum (ER). All subunits are required for a maximal enzyme activity. This chain is Dolichyl-diphosphooligosaccharide--protein glycosyltransferase subunit 4B (OST4B), found in Oryza sativa subsp. japonica (Rice).